A 358-amino-acid chain; its full sequence is Spermatogenesis-associated protein 22 (358 aa).

Composition is skewed to polar residues over residues 1–12 (MKRNLNESSARS), 30–51 (QPLTSNPLQNDPGVSTVSDSYG), 81–121 (PASA…TSLR), and 150–159 (QQQKQFQTPE). Disordered stretches follow at residues 1–51 (MKRN…DSYG), 81–122 (PASA…SLRT), and 150–172 (QQQKQFQTPEFPNLPGHKEAEVP).

As to quaternary structure, component of a multiprotein complex with MEIOB and RPA2. Interacts with MEIOB. Interacts with the complex BRME1:HSF2BP:BRCA2. In terms of tissue distribution, specifically expressed in gonadal germ cells, when male and female germ cells progress through prophase of meiosis I.

It localises to the chromosome. Functionally, meiosis-specific protein required for homologous recombination in meiosis I. This chain is Spermatogenesis-associated protein 22, found in Mus musculus (Mouse).